We begin with the raw amino-acid sequence, 184 residues long: ATP-dependent protease subunit HslV (184 aa).

The active site involves T12. Na(+) contacts are provided by A166, C169, and T172.

It belongs to the peptidase T1B family. HslV subfamily. A double ring-shaped homohexamer of HslV is capped on each side by a ring-shaped HslU homohexamer. The assembly of the HslU/HslV complex is dependent on binding of ATP.

Its subcellular location is the cytoplasm. It catalyses the reaction ATP-dependent cleavage of peptide bonds with broad specificity.. With respect to regulation, allosterically activated by HslU binding. Protease subunit of a proteasome-like degradation complex believed to be a general protein degrading machinery. This Brucella ovis (strain ATCC 25840 / 63/290 / NCTC 10512) protein is ATP-dependent protease subunit HslV.